Here is a 653-residue protein sequence, read N- to C-terminus: Dual specificity protein kinase shkB (653 aa).

A disordered region spans residues 112 to 133; that stretch reads NPNNNNNNSNNTNSSDSNQNYS. The Protein kinase domain maps to 174 to 432; it reads YNREAKLGSG…FAEISKQRIL (259 aa). ATP is bound by residues 180–188 and Lys201; that span reads LGSGAFGSV. Asp298 serves as the catalytic Proton acceptor. The region spanning 534–625 is the SH2 domain; the sequence is GFMAATSSKN…IKEPFEGGPF (92 aa).

The protein belongs to the protein kinase superfamily. TKL Ser/Thr protein kinase family. SH2 domain-containing protein kinase subfamily.

It is found in the membrane. The enzyme catalyses L-seryl-[protein] + ATP = O-phospho-L-seryl-[protein] + ADP + H(+). It carries out the reaction L-threonyl-[protein] + ATP = O-phospho-L-threonyl-[protein] + ADP + H(+). Required for proper chemotaxis and phagocytosis; proper spatiotemporal control of F-actin levels in chemotaxing cells. Negative regulator of the PI3K (phosphatidylinositol 3 kinase) pathway. Predominantly phosphorylates serines and threonines and tyrosines at a lower level. In Dictyostelium discoideum (Social amoeba), this protein is Dual specificity protein kinase shkB (shkB).